A 361-amino-acid chain; its full sequence is sn-glycerol-3-phosphate import ATP-binding protein UgpC (361 aa).

The region spanning 4–235 (VTLRNVRKTY…PATTFVASFI (232 aa)) is the ABC transporter domain. ATP is bound at residue 37–44 (GPSGCGKS).

Belongs to the ABC transporter superfamily. sn-glycerol-3-phosphate importer (TC 3.A.1.1.3) family. The complex is composed of two ATP-binding proteins (UgpC), two transmembrane proteins (UgpA and UgpE) and a solute-binding protein (UgpB).

It localises to the cell inner membrane. The enzyme catalyses sn-glycerol 3-phosphate(out) + ATP + H2O = sn-glycerol 3-phosphate(in) + ADP + phosphate + H(+). Functionally, part of the ABC transporter complex UgpBAEC involved in sn-glycerol-3-phosphate (G3P) import. Responsible for energy coupling to the transport system. The protein is sn-glycerol-3-phosphate import ATP-binding protein UgpC of Rhodopseudomonas palustris (strain BisA53).